The following is a 362-amino-acid chain: Probable secreted beta-glucosidase UTH1 (362 aa).

A signal peptide spans 1–17; the sequence is MKLSALLALSASTAVLA.

It belongs to the SUN family.

Its subcellular location is the mitochondrion outer membrane. It is found in the secreted. The protein localises to the cell wall. Its function is as follows. Involved in aging, oxidative stress response, and in the regulation of mitochondrial biogenesis. Inactivation of UTH1 increases life span, leads to higher resistance to heat stress and to hydrogen peroxide, and increases sensitivity to the superoxide radical-generating drug paraquat and to copper. Also required for the selective autophagic degradation of mitochondria (mitophagy) in response to nitrogen starvation. May play a role in cell wall morphogenesis and septation. Involved in the remodeling of the cell wall during the various phases of yeast culture development and under various environmental conditions and plays a role in septation. Involved in cell sensitivity to boric acid. This Saccharomyces cerevisiae (strain YJM789) (Baker's yeast) protein is Probable secreted beta-glucosidase UTH1 (UTH1).